A 194-amino-acid polypeptide reads, in one-letter code: dCTP deaminase, dUMP-forming (194 aa).

DCTP is bound by residues 104 to 109, Asp-122, 130 to 132, Gln-151, Tyr-165, Lys-172, and Gln-176; these read RSSLGR and TLE. Glu-132 acts as the Proton donor/acceptor in catalysis.

It belongs to the dCTP deaminase family. As to quaternary structure, homotrimer.

The enzyme catalyses dCTP + 2 H2O = dUMP + NH4(+) + diphosphate. The protein operates within pyrimidine metabolism; dUMP biosynthesis; dUMP from dCTP: step 1/1. In terms of biological role, bifunctional enzyme that catalyzes both the deamination of dCTP to dUTP and the hydrolysis of dUTP to dUMP without releasing the toxic dUTP intermediate. This chain is dCTP deaminase, dUMP-forming, found in Dictyoglomus turgidum (strain DSM 6724 / Z-1310).